The primary structure comprises 530 residues: UDP-N-acetylmuramoyl-L-alanyl-D-glutamate--2,6-diaminopimelate ligase (530 aa).

Ser-21 contacts UDP-N-acetyl-alpha-D-muramoyl-L-alanyl-D-glutamate. Residue 99–105 (GTNGKSS) participates in ATP binding. Residues 145–146 (TT), Ser-172, Gln-178, and Arg-180 contribute to the UDP-N-acetyl-alpha-D-muramoyl-L-alanyl-D-glutamate site. Lys-212 bears the N6-carboxylysine mark. The RPE1 insert domain maps to 221-269 (FKPAYREEFKGDTEHSTTAYILVREDASTGSTSKLLLEAKFGKMSTEYL). Meso-2,6-diaminopimelate contacts are provided by residues Arg-422, 446-449 (DNPR), Gly-496, and Glu-500. The short motif at 446–449 (DNPR) is the Meso-diaminopimelate recognition motif element.

This sequence belongs to the MurCDEF family. MurE subfamily. Mg(2+) is required as a cofactor. In terms of processing, carboxylation is probably crucial for Mg(2+) binding and, consequently, for the gamma-phosphate positioning of ATP.

The protein localises to the cytoplasm. The enzyme catalyses UDP-N-acetyl-alpha-D-muramoyl-L-alanyl-D-glutamate + meso-2,6-diaminopimelate + ATP = UDP-N-acetyl-alpha-D-muramoyl-L-alanyl-gamma-D-glutamyl-meso-2,6-diaminopimelate + ADP + phosphate + H(+). It functions in the pathway cell wall biogenesis; peptidoglycan biosynthesis. Its function is as follows. Catalyzes the addition of meso-diaminopimelic acid to the nucleotide precursor UDP-N-acetylmuramoyl-L-alanyl-D-glutamate (UMAG) in the biosynthesis of bacterial cell-wall peptidoglycan. The protein is UDP-N-acetylmuramoyl-L-alanyl-D-glutamate--2,6-diaminopimelate ligase of Rickettsia felis (strain ATCC VR-1525 / URRWXCal2) (Rickettsia azadi).